The chain runs to 343 residues: Phosphate acyltransferase (343 aa).

It belongs to the PlsX family. Homodimer. Probably interacts with PlsY.

The protein resides in the cytoplasm. It catalyses the reaction a fatty acyl-[ACP] + phosphate = an acyl phosphate + holo-[ACP]. The protein operates within lipid metabolism; phospholipid metabolism. In terms of biological role, catalyzes the reversible formation of acyl-phosphate (acyl-PO(4)) from acyl-[acyl-carrier-protein] (acyl-ACP). This enzyme utilizes acyl-ACP as fatty acyl donor, but not acyl-CoA. This Acidovorax sp. (strain JS42) protein is Phosphate acyltransferase.